The chain runs to 361 residues: Septin-1 (361 aa).

The Septin-type G domain occupies 32–304 (KGFEFTLMVV…ENYRSDRLAK (273 aa)). A G1 motif region spans residues 42 to 49 (GESGLGKS). Residues 42–49 (GESGLGKS), Thr76, Gly102, 181–189 (KADCLTKKE), Gly239, and Arg254 contribute to the GTP site. The segment at 99–102 (DTPG) is G3 motif. The tract at residues 180–183 (AKAD) is G4 motif. Position 319 is a phosphoserine (Ser319).

This sequence belongs to the TRAFAC class TrmE-Era-EngA-EngB-Septin-like GTPase superfamily. Septin GTPase family. In terms of assembly, likely part of a multicomponent septin complex that includes pnut. Interacts with pnut. Interacts with park. Ubiquitinated by park, leading to its degradation by the proteasome. In terms of tissue distribution, accumulates at the leading edge of the cleavage furrow in dividing cells and cellularizing embryos (at protein level). Also accumulates at the leading edge of the embryo epithelium during dorsal closure, in the embryonic neurons, and at the baso-lateral surfaces of ovarian follicle cells (at protein level).

The protein resides in the cytoplasm. Its function is as follows. Involved in cytokinesis. May be involved in p53-dependent apoptosis. In Drosophila melanogaster (Fruit fly), this protein is Septin-1.